A 464-amino-acid chain; its full sequence is ATP synthase subunit beta (464 aa).

153–160 (GGAGVGKT) contributes to the ATP binding site.

It belongs to the ATPase alpha/beta chains family. As to quaternary structure, F-type ATPases have 2 components, CF(1) - the catalytic core - and CF(0) - the membrane proton channel. CF(1) has five subunits: alpha(3), beta(3), gamma(1), delta(1), epsilon(1). CF(0) has three main subunits: a(1), b(2) and c(9-12). The alpha and beta chains form an alternating ring which encloses part of the gamma chain. CF(1) is attached to CF(0) by a central stalk formed by the gamma and epsilon chains, while a peripheral stalk is formed by the delta and b chains.

The protein localises to the cell membrane. It carries out the reaction ATP + H2O + 4 H(+)(in) = ADP + phosphate + 5 H(+)(out). In terms of biological role, produces ATP from ADP in the presence of a proton gradient across the membrane. The catalytic sites are hosted primarily by the beta subunits. This Clostridium novyi (strain NT) protein is ATP synthase subunit beta.